Consider the following 186-residue polypeptide: Translation initiation factor IF-3 (186 aa).

The segment at 1–20 (MINRSAGKDRDRSRSGDKEL) is disordered.

The protein belongs to the IF-3 family. Monomer.

It is found in the cytoplasm. IF-3 binds to the 30S ribosomal subunit and shifts the equilibrium between 70S ribosomes and their 50S and 30S subunits in favor of the free subunits, thus enhancing the availability of 30S subunits on which protein synthesis initiation begins. This chain is Translation initiation factor IF-3, found in Borrelia hermsii (strain HS1 / DAH).